The sequence spans 258 residues: Methanol--corrinoid protein (258 aa).

The B12-binding N-terminal domain occupies 30-124; sequence AEELYPKDEL…NSGATPKTKG (95 aa). The region spanning 123–248 is the B12-binding domain; that stretch reads KGTVVCHVAE…DAIIAGTTDV (126 aa). His136 provides a ligand contact to methylcob(III)alamin.

It belongs to the methylamine corrinoid protein family. As to quaternary structure, heterotetramer, composed of 2 MtaB and 2 MtaC subunits.

In terms of biological role, harbors a corrinoid prosthetic group and acts as a methyl group carrier in methanogenesis in the methanol pathway. The methyl group of methanol is first transferred to the corrinoid prosthetic group of MtaC in the cob(I)amide oxidation state. This reaction is mediated by MtaB. The methyl group from MtaC is then transferred to coenzyme M by MtaA. The chain is Methanol--corrinoid protein (mtaC) from Methanosarcina barkeri (strain Fusaro / DSM 804).